A 142-amino-acid polypeptide reads, in one-letter code: Glutamate-rich protein 2 (142 aa).

Disordered stretches follow at residues 1-55 (MSKN…HAPL) and 104-142 (EKAQ…CEDG). Residues 9–27 (EQEKNNEHCPEDINDKLSE) show a composition bias toward basic and acidic residues. The span at 28-43 (STDDDGEDTSDEDKEE) shows a compositional bias: acidic residues. A compositionally biased stretch (basic and acidic residues) spans 44-53 (DSNPNKDTHA). A compositionally biased stretch (acidic residues) spans 109–142 (LEEDDDESEEDNSESEGESTEDPSEESSDECEDG).

This is Glutamate-rich protein 2 (ERICH2) from Bos taurus (Bovine).